The sequence spans 205 residues: Octanoyltransferase (205 aa).

In terms of domain architecture, BPL/LPL catalytic spans E30–A205. Residues R69–H76, S136–G138, and G149–A151 contribute to the substrate site. The active-site Acyl-thioester intermediate is the C167.

This sequence belongs to the LipB family.

The protein resides in the cytoplasm. The catalysed reaction is octanoyl-[ACP] + L-lysyl-[protein] = N(6)-octanoyl-L-lysyl-[protein] + holo-[ACP] + H(+). It functions in the pathway protein modification; protein lipoylation via endogenous pathway; protein N(6)-(lipoyl)lysine from octanoyl-[acyl-carrier-protein]: step 1/2. Its function is as follows. Catalyzes the transfer of endogenously produced octanoic acid from octanoyl-acyl-carrier-protein onto the lipoyl domains of lipoate-dependent enzymes. Lipoyl-ACP can also act as a substrate although octanoyl-ACP is likely to be the physiological substrate. This Ectopseudomonas mendocina (strain ymp) (Pseudomonas mendocina) protein is Octanoyltransferase.